Here is a 362-residue protein sequence, read N- to C-terminus: Prostaglandin F2-alpha receptor (362 aa).

At 1–31 (MSTNSSIQPVSPESELLSNTTCQLEEDLSIS) the chain is on the extracellular side. N-linked (GlcNAc...) asparagine glycans are attached at residues asparagine 4 and asparagine 19. Residues 32–54 (FSIIFMTVGILSNSLAIAILMKA) traverse the membrane as a helical segment. The Cytoplasmic portion of the chain corresponds to 55-69 (YQRFRQKYKSSFLLL). Residues 70–90 (ASALVITDFFGHLINGTIAVF) traverse the membrane as a helical segment. Topologically, residues 91–109 (VYASDKDWIYFDKSNILCS) are extracellular. Residues cysteine 108 and cysteine 186 are joined by a disulfide bond. The helical transmembrane segment at 110–131 (IFGICMVFSGLCPLFLGSLMAI) threads the bilayer. Residues 132–152 (ERCIGVTKPIFHSTKITTKHV) are Cytoplasmic-facing. Residues 153-175 (KMMLSGVCFFAVFVALLPILGHR) form a helical membrane-spanning segment. Topologically, residues 176-198 (DYKIQASRTWCFYKTDEIKDWED) are extracellular. Residues 199 to 224 (RFYLLLFAFLGLLALGISFVCNAITG) form a helical membrane-spanning segment. The Cytoplasmic portion of the chain corresponds to 225–250 (ISLLKVKFRSQQHRQGRSHHFEMVIQ). Residues 251-267 (LLGIMCVSCICWSPFLV) traverse the membrane as a helical segment. Topologically, residues 268-285 (TMASIGMNIQDFKDSCER) are extracellular. Residues 286–307 (TLFTLRMATWNQILDPWVYILL) form a helical membrane-spanning segment. The Cytoplasmic portion of the chain corresponds to 308–362 (RKAVLRNLYVCTRRCCGVHVISLHVWELSSIKDSLKVAAISDLPVTEKVTQQTST).

This sequence belongs to the G-protein coupled receptor 1 family.

It is found in the cell membrane. In terms of biological role, receptor for prostaglandin F2-alpha (PGF2-alpha). The activity of this receptor is mediated by G proteins which activate a phosphatidylinositol-calcium second messenger system. Initiates luteolysis in the corpus luteum. The polypeptide is Prostaglandin F2-alpha receptor (PTGFR) (Bos taurus (Bovine)).